The following is a 314-amino-acid chain: 4-hydroxy-3-methylbut-2-enyl diphosphate reductase (314 aa).

Cysteine 12 lines the [4Fe-4S] cluster pocket. 2 residues coordinate (2E)-4-hydroxy-3-methylbut-2-enyl diphosphate: histidine 41 and histidine 74. Dimethylallyl diphosphate is bound by residues histidine 41 and histidine 74. 2 residues coordinate isopentenyl diphosphate: histidine 41 and histidine 74. Position 96 (cysteine 96) interacts with [4Fe-4S] cluster. Histidine 124 provides a ligand contact to (2E)-4-hydroxy-3-methylbut-2-enyl diphosphate. Histidine 124 lines the dimethylallyl diphosphate pocket. Position 124 (histidine 124) interacts with isopentenyl diphosphate. Catalysis depends on glutamate 126, which acts as the Proton donor. Residue threonine 167 coordinates (2E)-4-hydroxy-3-methylbut-2-enyl diphosphate. Position 197 (cysteine 197) interacts with [4Fe-4S] cluster. (2E)-4-hydroxy-3-methylbut-2-enyl diphosphate contacts are provided by serine 225, serine 226, asparagine 227, and serine 269. Positions 225, 226, 227, and 269 each coordinate dimethylallyl diphosphate. Isopentenyl diphosphate-binding residues include serine 225, serine 226, asparagine 227, and serine 269.

It belongs to the IspH family. [4Fe-4S] cluster is required as a cofactor.

The catalysed reaction is isopentenyl diphosphate + 2 oxidized [2Fe-2S]-[ferredoxin] + H2O = (2E)-4-hydroxy-3-methylbut-2-enyl diphosphate + 2 reduced [2Fe-2S]-[ferredoxin] + 2 H(+). It carries out the reaction dimethylallyl diphosphate + 2 oxidized [2Fe-2S]-[ferredoxin] + H2O = (2E)-4-hydroxy-3-methylbut-2-enyl diphosphate + 2 reduced [2Fe-2S]-[ferredoxin] + 2 H(+). It participates in isoprenoid biosynthesis; dimethylallyl diphosphate biosynthesis; dimethylallyl diphosphate from (2E)-4-hydroxy-3-methylbutenyl diphosphate: step 1/1. The protein operates within isoprenoid biosynthesis; isopentenyl diphosphate biosynthesis via DXP pathway; isopentenyl diphosphate from 1-deoxy-D-xylulose 5-phosphate: step 6/6. In terms of biological role, catalyzes the conversion of 1-hydroxy-2-methyl-2-(E)-butenyl 4-diphosphate (HMBPP) into a mixture of isopentenyl diphosphate (IPP) and dimethylallyl diphosphate (DMAPP). Acts in the terminal step of the DOXP/MEP pathway for isoprenoid precursor biosynthesis. In Aliivibrio salmonicida (strain LFI1238) (Vibrio salmonicida (strain LFI1238)), this protein is 4-hydroxy-3-methylbut-2-enyl diphosphate reductase.